We begin with the raw amino-acid sequence, 565 residues long: Deformed epidermal autoregulatory factor 1 homolog (565 aa).

Disordered stretches follow at residues 29–62 and 162–189; these read AAAA…ETRR and GLKG…EKGG. Residues 169 to 181 are compositionally biased toward pro residues; that stretch reads PLTPGPQSPPTPL. T171 carries the phosphothreonine modification. The residue at position 176 (S176) is a Phosphoserine. Phosphothreonine is present on T179. The region spanning 193-273 is the SAND domain; it reads NWDPSVYDSE…QCLIQDGILN (81 aa). Residues 301–316 carry the Nuclear localization signal motif; that stretch reads KRRKKENELPTTPVKK. An interaction with LMO4 region spans residues 403 to 478; it reads IAPFPEAALP…QLKTLFEQAK (76 aa). Phosphothreonine is present on T432. A phosphoserine mark is found at S443 and S448. Zn(2+) is bound by residues C504, C507, C515, C518, C524, C528, H536, and C540. An MYND-type zinc finger spans residues 504–540; sequence CVNCGREAMSECTGCHKVNYCSTFCQRKDWKDHQHVC.

As to quaternary structure, homodimer. Interacts with LMO4; LMO4 blocks export from nucleus. Interacts with LMO2 and CLIM2. May interact with the corepressors NCOR1 and NCRO2. Identified in a complex with XRCC5 and XRCC6. Interacts (via the SAND domain) with the DNA-PK complex subunit XRCC6; the interaction is direct and may be inhibited by DNA-binding. In terms of processing, may be phosphorylated by DNA-PK complex in a DNA independent manner (in vitro). As to expression, ubiquitous. Detected in brain, spleen, adrenal, lung, skeletal muscle, liver, kidney, and in developing germ cells in testis. In pituitary, restricted to hormone-secreting cell types.

It is found in the nucleus. It localises to the secreted. In terms of biological role, transcription factor that binds to sequence with multiple copies of 5'-TTC[CG]G-3' present in its own promoter and that of the HNRPA2B1 gene. Down-regulates transcription of these genes. Binds to the retinoic acid response element (RARE) 5'-AGGGTTCACCGAAAGTTCA-3'. Activates the proenkephalin gene independently of promoter binding, probably through protein-protein interaction. When secreted, behaves as an inhibitor of cell proliferation, by arresting cells in the G0 or G1 phase. Regulates epithelial cell proliferation and side-branching in the mammary gland. Required for neural tube closure and skeletal patterning. Controls the expression of peripheral tissue antigens in pancreatic lymph nodes. Transcriptional activator of EIF4G3. May also involved in behavior. The chain is Deformed epidermal autoregulatory factor 1 homolog (Deaf1) from Rattus norvegicus (Rat).